The sequence spans 273 residues: Large ribosomal subunit protein uL2 (273 aa).

Disordered regions lie at residues 28–53 and 221–273; these read KPFA…TTRH and RGTA…RRSK. A compositionally biased stretch (low complexity) spans 39–48; the sequence is KSGGRNNNGR.

Belongs to the universal ribosomal protein uL2 family. Part of the 50S ribosomal subunit. Forms a bridge to the 30S subunit in the 70S ribosome.

In terms of biological role, one of the primary rRNA binding proteins. Required for association of the 30S and 50S subunits to form the 70S ribosome, for tRNA binding and peptide bond formation. It has been suggested to have peptidyltransferase activity; this is somewhat controversial. Makes several contacts with the 16S rRNA in the 70S ribosome. This is Large ribosomal subunit protein uL2 from Klebsiella pneumoniae (strain 342).